The chain runs to 349 residues: Fructose-1,6-bisphosphatase class 1 (349 aa).

Glu-113, Asp-135, Ile-137, and Asp-138 together coordinate Mg(2+). Substrate contacts are provided by residues Asp-138–Ser-141, Asn-230, Tyr-258, and Lys-288. Glu-294 lines the Mg(2+) pocket.

It belongs to the FBPase class 1 family. As to quaternary structure, homotetramer. Requires Mg(2+) as cofactor.

It localises to the cytoplasm. It catalyses the reaction beta-D-fructose 1,6-bisphosphate + H2O = beta-D-fructose 6-phosphate + phosphate. It participates in carbohydrate biosynthesis; Calvin cycle. The sequence is that of Fructose-1,6-bisphosphatase class 1 from Nostoc punctiforme (strain ATCC 29133 / PCC 73102).